Consider the following 242-residue polypeptide: Segregation and condensation protein A (242 aa).

The protein belongs to the ScpA family. Component of a cohesin-like complex composed of ScpA, ScpB and the Smc homodimer, in which ScpA and ScpB bind to the head domain of Smc. The presence of the three proteins is required for the association of the complex with DNA.

It is found in the cytoplasm. In terms of biological role, participates in chromosomal partition during cell division. May act via the formation of a condensin-like complex containing Smc and ScpB that pull DNA away from mid-cell into both cell halves. This Streptococcus pneumoniae serotype 2 (strain D39 / NCTC 7466) protein is Segregation and condensation protein A.